We begin with the raw amino-acid sequence, 250 residues long: Probable phosphatase VPA1527 (250 aa).

Positions 8, 10, 16, 41, 74, 102, 132, 194, and 196 each coordinate Zn(2+).

It belongs to the PHP family. Zn(2+) serves as cofactor.

This chain is Probable phosphatase VPA1527, found in Vibrio parahaemolyticus serotype O3:K6 (strain RIMD 2210633).